The primary structure comprises 338 residues: NADPH dehydrogenase (338 aa).

Tyr-28 serves as a coordination point for substrate. Ala-60 and Gln-102 together coordinate FMN. His-164–His-167 provides a ligand contact to substrate. FMN is bound by residues Arg-215 and Ala-307–Arg-308.

The protein belongs to the NADH:flavin oxidoreductase/NADH oxidase family. NamA subfamily. In terms of assembly, homotetramer. FMN serves as cofactor.

It catalyses the reaction A + NADPH + H(+) = AH2 + NADP(+). Its function is as follows. Catalyzes the reduction of the double bond of an array of alpha,beta-unsaturated aldehydes and ketones. It also reduces the nitro group of nitroester and nitroaromatic compounds. It could have a role in detoxification processes. This chain is NADPH dehydrogenase, found in Bacillus velezensis (strain DSM 23117 / BGSC 10A6 / LMG 26770 / FZB42) (Bacillus amyloliquefaciens subsp. plantarum).